The sequence spans 898 residues: Phosphoenolpyruvate carboxylase (898 aa).

Residues H134 and K564 contribute to the active site.

It belongs to the PEPCase type 1 family. The cofactor is Mg(2+).

The enzyme catalyses oxaloacetate + phosphate = phosphoenolpyruvate + hydrogencarbonate. Functionally, forms oxaloacetate, a four-carbon dicarboxylic acid source for the tricarboxylic acid cycle. The sequence is that of Phosphoenolpyruvate carboxylase from Chromobacterium violaceum (strain ATCC 12472 / DSM 30191 / JCM 1249 / CCUG 213 / NBRC 12614 / NCIMB 9131 / NCTC 9757 / MK).